A 347-amino-acid polypeptide reads, in one-letter code: Elongation factor Ts (347 aa).

Residues 80–83 (TDFV) form an involved in Mg(2+) ion dislocation from EF-Tu region.

It belongs to the EF-Ts family.

Its subcellular location is the cytoplasm. Functionally, associates with the EF-Tu.GDP complex and induces the exchange of GDP to GTP. It remains bound to the aminoacyl-tRNA.EF-Tu.GTP complex up to the GTP hydrolysis stage on the ribosome. The chain is Elongation factor Ts from Streptococcus gordonii (strain Challis / ATCC 35105 / BCRC 15272 / CH1 / DL1 / V288).